The primary structure comprises 85 residues: Putative RING finger protein 095L (85 aa).

The RING-type; degenerate zinc finger occupies 39–73 (CPIWYNYQVNTVFLPCAHVACYLCSKIIKNCHLCR).

The protein is Putative RING finger protein 095L of Invertebrate iridescent virus 6 (IIV-6).